Here is a 373-residue protein sequence, read N- to C-terminus: Securin (373 aa).

Positions 1-10 (MMPANEDKEN) are enriched in basic and acidic residues. The disordered stretch occupies residues 1-27 (MMPANEDKENNIVYTGNESSGINFPQT). Polar residues predominate over residues 12–26 (IVYTGNESSGINFPQ). The D-box motif lies at 85 to 88 (RLPL). Residues 177–278 (ADSGKNEESS…LPYVPEGYSP (102 aa)) form a disordered region. Phosphoserine is present on residues Ser185, Ser186, Ser212, and Ser213. Residues 185 to 194 (SSDDDEGNED) show a composition bias toward acidic residues. Low complexity predominate over residues 225–235 (LFNEQGGLQQL). Residues 240-256 (TKNEQKTKNDKSDKTDD) are compositionally biased toward basic and acidic residues. Ser277 carries the phosphoserine modification. A Phosphoserine; by CDC28 modification is found at Ser292.

Belongs to the securin family. As to quaternary structure, interacts with the caspase-like ESP1, and prevents its protease activity probably by covering its active site. Interacts with CDC20. In terms of processing, phosphorylated by CDC28. The phosphorylation may be important for ESP1 localization to the nucleus. Ubiquitinated by the anaphase promoting complex (APC) at the onset of anaphase, conducting to its degradation.

It localises to the cytoplasm. It is found in the nucleus. Regulatory protein, which plays a central role in chromosome stability. Probably acts by blocking the action of key proteins. During the mitosis, it blocks Separase/ESP1 function, preventing the proteolysis of the cohesin complex and the subsequent segregation of the chromosomes. At the onset of anaphase, it is ubiquitinated, conducting to its destruction and to the liberation of ESP1. This Saccharomyces cerevisiae (strain ATCC 204508 / S288c) (Baker's yeast) protein is Securin (PDS1).